Reading from the N-terminus, the 157-residue chain is Nascent polypeptide-associated complex subunit alpha (157 aa).

An NAC-A/B domain is found at 6-71; sequence TTDESHIHKT…LGSPVNLHQL (66 aa). Positions 81 to 107 are enriched in basic and acidic residues; sequence SSKDQEGPGLYDEIHSDPQEDGVKEAE. The interval 81–116 is disordered; sequence SSKDQEGPGLYDEIHSDPQEDGVKEAEEITVDPSDE. The UBA domain occupies 118–157; the sequence is LSEEDIKLISSQVKASRNDIIKALVESEYDVVDAMMKLTK.

The protein belongs to the NAC-alpha family.

It localises to the cytoplasm. Its subcellular location is the nucleus. Its function is as follows. May be involved in mitochondrial protein import by enhancing productive ribosome interactions with the outer mitochondrial membrane and blocks the inappropriate interaction of ribosomes translating non-secretory nascent polypeptides with translocation sites in the membrane of the endoplasmic reticulum. EGD2 may also be involved in transcription regulation. In Encephalitozoon cuniculi (strain GB-M1) (Microsporidian parasite), this protein is Nascent polypeptide-associated complex subunit alpha (EGD2).